Here is a 209-residue protein sequence, read N- to C-terminus: Large ribosomal subunit protein uL4 (209 aa).

Residues Arg-45–Ser-77 are disordered.

It belongs to the universal ribosomal protein uL4 family. Part of the 50S ribosomal subunit.

Its function is as follows. One of the primary rRNA binding proteins, this protein initially binds near the 5'-end of the 23S rRNA. It is important during the early stages of 50S assembly. It makes multiple contacts with different domains of the 23S rRNA in the assembled 50S subunit and ribosome. In terms of biological role, forms part of the polypeptide exit tunnel. The polypeptide is Large ribosomal subunit protein uL4 (Flavobacterium johnsoniae (strain ATCC 17061 / DSM 2064 / JCM 8514 / BCRC 14874 / CCUG 350202 / NBRC 14942 / NCIMB 11054 / UW101) (Cytophaga johnsonae)).